A 251-amino-acid chain; its full sequence is Phosphate import ATP-binding protein PstB (251 aa).

Positions 5-246 constitute an ABC transporter domain; the sequence is IEIENFSAYY…PKNRLTEEYL (242 aa). 37–44 contacts ATP; it reads GPSGCGKT.

Belongs to the ABC transporter superfamily. Phosphate importer (TC 3.A.1.7) family. As to quaternary structure, the complex is composed of two ATP-binding proteins (PstB), two transmembrane proteins (PstC and PstA) and a solute-binding protein (PstS).

It is found in the cell inner membrane. The enzyme catalyses phosphate(out) + ATP + H2O = ADP + 2 phosphate(in) + H(+). Part of the ABC transporter complex PstSACB involved in phosphate import. Responsible for energy coupling to the transport system. The polypeptide is Phosphate import ATP-binding protein PstB (Thermotoga maritima (strain ATCC 43589 / DSM 3109 / JCM 10099 / NBRC 100826 / MSB8)).